The primary structure comprises 637 residues: DNA damage-binding protein CMR1 (637 aa).

Disordered regions lie at residues 1 to 91 (MIES…EEEA) and 144 to 168 (LVDTKDENKRRSANKPDPQFSTERR). 2 stretches are compositionally biased toward basic and acidic residues: residues 8-23 (EQERLKNIRENERLMK) and 74-91 (AGHEADSETLKRKYEEEA). 5 WD repeats span residues 185 to 226 (VTPK…FASN), 255 to 295 (HARS…SEEI), 297 to 321 (AGEEDVLLSIFDVLSPSTHPSVYMD), 361 to 401 (VCEK…SVVK), and 431 to 470 (KARQACTSVDFSPRGDQLVGVSYDDVVKVWSMEPGSLFSE). Disordered regions lie at residues 482–508 (SNKPKGAVKKQVPDSASDTGPGLLSWL) and 525–549 (KQEQDAPSPSLSKRPDDVLANPTRI). WD repeat units follow at residues 556-598 (GKWL…LRSL) and 602-637 (NLVTAVPAVTCMHPVLPARLVTGNASGRCTFWSPDP).

Belongs to the WD repeat DDB2/WDR76 family.

Functionally, DNA-binding protein that binds to both single- and double-stranded DNA. Binds preferentially to UV-damaged DNA. May be involved in DNA-metabolic processes. The chain is DNA damage-binding protein CMR1 from Mycosarcoma maydis (Corn smut fungus).